The chain runs to 243 residues: Venom nerve growth factor 1 (243 aa).

Positions 1-18 (MSMLCYTLIIAFLIGIWA) are cleaved as a signal peptide. The propeptide occupies 19–125 (APKSEDNVPL…TLNRNIRAKR (107 aa)). The segment covering 47–66 (GLKTSRNTDQRHPAPKKAED) has biased composition (basic and acidic residues). Residues 47-69 (GLKTSRNTDQRHPAPKKAEDQEL) are disordered. Cystine bridges form between Cys139-Cys204, Cys182-Cys232, and Cys192-Cys234. Asn148 carries an N-linked (GlcNAc...) asparagine glycan.

This sequence belongs to the NGF-beta family. As to quaternary structure, homodimer; non-covalently linked. Expressed by the venom gland.

It is found in the secreted. Its function is as follows. Nerve growth factor is important for the development and maintenance of the sympathetic and sensory nervous systems. It stimulates division and differentiation of sympathetic and embryonic sensory neurons as well as basal forebrain cholinergic neurons in the brain. Its relevance in the snake venom is not clear. However, it has been shown to inhibit metalloproteinase-dependent proteolysis of platelet glycoprotein Ib alpha, suggesting a metalloproteinase inhibition to prevent metalloprotease autodigestion and/or protection against prey proteases. Binds a lipid between the two protein chains in the homodimer. The lipid-bound form promotes histamine relase from mouse mast cells, contrary to the lipid-free form. The protein is Venom nerve growth factor 1 of Pseudonaja textilis (Eastern brown snake).